Here is a 195-residue protein sequence, read N- to C-terminus: HTH-type transcriptional regulator BetI (195 aa).

Residues 8-68 (EIRRAQLIDA…ATMRHVLRDL (61 aa)) enclose the HTH tetR-type domain. A DNA-binding region (H-T-H motif) is located at residues 31-50 (TLASVAQRASISTGIVSHYF).

The protein operates within amine and polyamine biosynthesis; betaine biosynthesis via choline pathway [regulation]. Functionally, repressor involved in the biosynthesis of the osmoprotectant glycine betaine. It represses transcription of the choline transporter BetT and the genes of BetAB involved in the synthesis of glycine betaine. The protein is HTH-type transcriptional regulator BetI of Paraburkholderia phytofirmans (strain DSM 17436 / LMG 22146 / PsJN) (Burkholderia phytofirmans).